A 356-amino-acid chain; its full sequence is Protein RecA (356 aa).

Residue 77-84 coordinates ATP; that stretch reads GPESSGKT.

It belongs to the RecA family.

It is found in the cytoplasm. Its function is as follows. Can catalyze the hydrolysis of ATP in the presence of single-stranded DNA, the ATP-dependent uptake of single-stranded DNA by duplex DNA, and the ATP-dependent hybridization of homologous single-stranded DNAs. It interacts with LexA causing its activation and leading to its autocatalytic cleavage. The sequence is that of Protein RecA from Caulobacter sp. (strain K31).